The chain runs to 543 residues: MVKAMEQEQETYKSRLFHFKNMNENSASRHVKSWSSDCAMRMDGSDNLDDDDNDMMMFRSQPGKCGSVDRPSLPIGGVTPNRNDKLPRVSSSDSMEALIILQAAMEQMKEKFSKLLLGEDMSGGGKGVSSALALSNAITNLAASAFGEQRRLEPMAVDRKTRWRREIGWLISVADYIVEFAPTQQTNKDGTSMEVMSTRQRTDLLCNIPALKKLDAMLLDCLDKFKDQDEFYYVKKDSPDSCETRNDEKWWLPAVKVPPNGLSEISRRFLQSQKECVNQVLKAAMAINAQVLSEMEIPESYLESLPKNGRASLGDVIYRMITVEMFDADQFLIEMDLSSEHKILDLKNRIEASIVIWKRKMVQKDTKSPWGSTVSIEKREQFEERAETILLLLKQGFPGISQSSLDISKIQFNRDVGLAILESYSRVLESLAHTVMSRIEDVLYADQLTQEPTNNAPSKNRYSLKENEKLREERLSFTEDMASGTLSDVMQWGNKNNEMKKESFFGDREKPLLSKVTGIMTNNKKSSYLDNLGAMRSPTARYS.

The tract at residues 61–89 is disordered; the sequence is QPGKCGSVDRPSLPIGGVTPNRNDKLPRV. The region spanning 95-456 is the PRONE domain; that stretch reads MEALIILQAA…QLTQEPTNNA (362 aa).

In terms of assembly, interacts with ARAC4/ROP2, ARAC3/ROP, ARAC9/ROP8, PHYA and PHYB. In terms of tissue distribution, highly expressed in elongating regions of roots and pollen grains. Expressed in flowers, and at lower levels in leaves and stems.

It localises to the cytoplasm. Guanine-nucleotide exchange factor (GEF) that acts as an activator of Rop (Rho of plants) GTPases by promoting the exchange of GDP for GTP. Functions as a light-signaling switch that functions in root growth and development through the activation of Rop in a phytochrome-dependent manner. May act as a negative regulator of phytochrome-mediated primary root development. This is Rop guanine nucleotide exchange factor 11 (ROPGEF11) from Arabidopsis thaliana (Mouse-ear cress).